Consider the following 163-residue polypeptide: Neurotrophin-3 (163 aa).

Residues 1–3 (IQS) form the signal peptide. A propeptide spanning residues 4-119 (SSMDQGILTE…VLNRTSRRKR (116 aa)) is cleaved from the precursor. Residues 36–61 (QTARTKDGMQTTVKKTEAEADARASQ) are disordered. Basic and acidic residues predominate over residues 49–61 (KKTEAEADARASQ). An N-linked (GlcNAc...) asparagine glycan is attached at Asn-112.

The protein belongs to the NGF-beta family.

Its subcellular location is the secreted. Seems to promote the survival of visceral and proprioceptive sensory neurons. The polypeptide is Neurotrophin-3 (NTF3) (Boa constrictor (Boa)).